Reading from the N-terminus, the 360-residue chain is Protein RecA (360 aa).

64–71 lines the ATP pocket; that stretch reads GHESSGKT. The interval 333-360 is disordered; sequence QEQVQPEPKSKQSKSKQASEQATQDELI.

Belongs to the RecA family.

It is found in the cytoplasm. In terms of biological role, can catalyze the hydrolysis of ATP in the presence of single-stranded DNA, the ATP-dependent uptake of single-stranded DNA by duplex DNA, and the ATP-dependent hybridization of homologous single-stranded DNAs. It interacts with LexA causing its activation and leading to its autocatalytic cleavage. This is Protein RecA from Francisella philomiragia subsp. philomiragia (strain ATCC 25017 / CCUG 19701 / FSC 153 / O#319-036).